A 611-amino-acid polypeptide reads, in one-letter code: Sensor histidine kinase WalK (611 aa).

The Cytoplasmic segment spans residues 1–13; the sequence is MNKVGFFRSIQFK. The chain crosses the membrane as a helical span at residues 14 to 34; sequence ITLIYVLLIIIAMQIIGVYFV. The Extracellular segment spans residues 35–182; it reads NQVEKSLISS…VFNQMKTINT (148 aa). The helical transmembrane segment at 183-203 threads the bilayer; sequence ILASGTGLALVLTALLGIFLA. The 53-residue stretch at 204–256 folds into the HAMP domain; that stretch reads RTITHPLSDMRKQAMELAKGNFSRKVKKYGHDEIGQLATTFNHLTRELEDAQA. The Cytoplasmic portion of the chain corresponds to 204–611; that stretch reads RTITHPLSDM…EEQEDDWDEA (408 aa). The PAS domain maps to 263–324; sequence RKLASVIAYM…QENYTFEDLV (62 aa). In terms of domain architecture, PAC spans 325–379; it reads EQQDSMLLEIERDDELTVLRVNFSVIQREHGKIDGLIAVIYDVTEQEKMDQERRE. Positions 383 to 602 constitute a Histidine kinase domain; the sequence is NVSHELRTPL…TITFTLPYKE (220 aa). Residue His386 is modified to Phosphohistidine; by autocatalysis.

As to quaternary structure, homodimer. Interacts with YycH and YycI. Autophosphorylated.

The protein localises to the cell membrane. The enzyme catalyses ATP + protein L-histidine = ADP + protein N-phospho-L-histidine.. In terms of biological role, member of the two-component regulatory system WalK/WalR involved in the regulation of the ftsAZ operon, the yocH and ykvT, cwlO, lytE, ydjM, yjeA, yoeB genes and the tagAB and tagDEF operons. Phosphorylates WalR. The protein is Sensor histidine kinase WalK of Bacillus subtilis (strain 168).